Reading from the N-terminus, the 157-residue chain is MAKVESFTLDHTKVKAPYVRLITVEEGPKGDKISNYDLRLVQPNENAIPTGGLHTIEHLLASLLRDRLDGVIDCSPFGCRTGFHLIVWGEHSTTEVAKALKSSLEEIRDTITWEDVPGTTIKTCGNYRDHSLFTAKEWCRDILEKGISDDPFERNVI.

Fe cation-binding residues include His-54, His-58, and Cys-124.

This sequence belongs to the LuxS family. In terms of assembly, homodimer. It depends on Fe cation as a cofactor.

The enzyme catalyses S-(5-deoxy-D-ribos-5-yl)-L-homocysteine = (S)-4,5-dihydroxypentane-2,3-dione + L-homocysteine. In terms of biological role, involved in the synthesis of autoinducer 2 (AI-2) which is secreted by bacteria and is used to communicate both the cell density and the metabolic potential of the environment. The regulation of gene expression in response to changes in cell density is called quorum sensing. Catalyzes the transformation of S-ribosylhomocysteine (RHC) to homocysteine (HC) and 4,5-dihydroxy-2,3-pentadione (DPD). The sequence is that of S-ribosylhomocysteine lyase from Lactobacillus acidophilus (strain ATCC 700396 / NCK56 / N2 / NCFM).